We begin with the raw amino-acid sequence, 642 residues long: Transcription factor 4 (642 aa).

Residues 1-25 (MFSPPVSSGKNGPTSLASGHFTGSN) are compositionally biased toward polar residues. Residues 1–59 (MFSPPVSSGKNGPTSLASGHFTGSNVEDRSSSGSWGNGGHPSPSRNYGDGTPYDHMTSR) form an essential for MYOD1 inhibition region. Disordered stretches follow at residues 1–296 (MFSP…SQTG), 311–354 (HTNN…EGPL), 444–545 (PNQV…MANN), and 609–642 (KRREEEKVSSEPPPLSLAGPHPGMGDASNHMGQM). Residues Ser42, Ser63, and Ser68 each carry the phosphoserine modification. 5 stretches are compositionally biased toward polar residues: residues 83-98 (GSYSSYGRESNLQGCH), 112-130 (GTLSPTKPGSQYYQYSSNN), 181-191 (PAASTFPSSFF), 218-230 (GSSSHIPQSSSYC), and 241-281 (PSHS…TDSI). Residues 312 to 323 (TNNSFSSNPSTP) show a composition bias toward low complexity. The span at 340-349 (NGGQASSSPN) shows a compositional bias: polar residues. Residue Ser347 is modified to Phosphoserine. Residues 354 to 375 (LHSLQSRIEDRLERLDDAIHVL) form a leucine-zipper region. Composition is skewed to low complexity over residues 444 to 455 (PNQVPVPQLPVQ) and 478 to 487 (GQSVSSGSSE). At Ser490 the chain carries Phosphoserine. Basic and acidic residues-rich tracts occupy residues 502-517 (KSSEDKKLDDDKKDIK) and 530-545 (PEQKAEREKERRMANN). One can recognise a bHLH domain in the interval 539 to 592 (ERRMANNARERLRVRDINEAFKELGRMVQLHLKSDKPQTKLLILHQAVAVILSL). The segment at 594–617 (QQVRERNLNPKAACLKRREEEKVS) is class A specific domain.

In terms of assembly, efficient DNA binding requires dimerization with another bHLH protein. Forms homo- or heterooligomers with myogenin. Interacts with HIVEP2. Interacts with NEUROD2. Interacts with AGBL1. Widely expressed.

The protein resides in the nucleus. In terms of biological role, transcription factor that binds to the immunoglobulin enhancer Mu-E5/KE5-motif. Involved in the initiation of neuronal differentiation. Activates transcription by binding to the E box (5'-CANNTG-3'). Binds to the thyroglobulin promoter. The chain is Transcription factor 4 (TCF4) from Canis lupus familiaris (Dog).